A 1372-amino-acid chain; its full sequence is DNA-directed RNA polymerase subunit beta' (1372 aa).

C69, C71, C84, and C87 together coordinate Zn(2+). D460, D462, and D464 together coordinate Mg(2+). 4 residues coordinate Zn(2+): C808, C882, C889, and C892.

This sequence belongs to the RNA polymerase beta' chain family. The RNAP catalytic core consists of 2 alpha, 1 beta, 1 beta' and 1 omega subunit. When a sigma factor is associated with the core the holoenzyme is formed, which can initiate transcription. The cofactor is Mg(2+). Zn(2+) serves as cofactor.

It carries out the reaction RNA(n) + a ribonucleoside 5'-triphosphate = RNA(n+1) + diphosphate. Functionally, DNA-dependent RNA polymerase catalyzes the transcription of DNA into RNA using the four ribonucleoside triphosphates as substrates. This chain is DNA-directed RNA polymerase subunit beta', found in Rickettsia conorii (strain ATCC VR-613 / Malish 7).